Here is a 92-residue protein sequence, read N- to C-terminus: Secreted RxLR effector protein RXLR-C02 (92 aa).

A signal peptide spans 1–21; that stretch reads MQFHLLVMTTIAASFAATGSA. The RxLR signature appears at 48–51; the sequence is RALR. The disordered stretch occupies residues 54–75; it reads ENRGLIGDDSDSSISDSDSEAK.

Belongs to the RxLR effector family.

Its subcellular location is the secreted. It localises to the host cytoplasm. The protein localises to the host nucleus. Secreted effector that suppresses pattern-triggered immunity (PTI) in plant host. This is Secreted RxLR effector protein RXLR-C02 from Plasmopara halstedii (Downy mildew of sunflower).